Here is a 296-residue protein sequence, read N- to C-terminus: NmrA-like family domain-containing protein 1 (296 aa).

NADP(+)-binding positions include 11–16 (GATGAQ), 37–41 (RSPGR), 58–59 (DQ), 79–81 (TNF), lysine 133, and 155–158 (YYEN).

Belongs to the NmrA-type oxidoreductase family. In terms of assembly, homodimer.

The protein resides in the cytoplasm. It localises to the perinuclear region. Its subcellular location is the nucleus. Its function is as follows. Redox sensor protein. Undergoes restructuring and subcellular redistribution in response to changes in intracellular NADPH/NADP(+) levels. This chain is NmrA-like family domain-containing protein 1 (NMRAL1), found in Gallus gallus (Chicken).